A 164-amino-acid chain; its full sequence is Transcription elongation factor GreA (164 aa).

The stretch at 50-76 (YHAAREEQGQQEARIRQLQELLNNAKV) forms a coiled coil.

The protein belongs to the GreA/GreB family.

Necessary for efficient RNA polymerase transcription elongation past template-encoded arresting sites. The arresting sites in DNA have the property of trapping a certain fraction of elongating RNA polymerases that pass through, resulting in locked ternary complexes. Cleavage of the nascent transcript by cleavage factors such as GreA or GreB allows the resumption of elongation from the new 3'terminus. GreA releases sequences of 2 to 3 nucleotides. The protein is Transcription elongation factor GreA of Mycolicibacterium smegmatis (strain ATCC 700084 / mc(2)155) (Mycobacterium smegmatis).